An 861-amino-acid chain; its full sequence is DNA mismatch repair protein MutS (861 aa).

Residue 617–624 (GPNMGGKS) coordinates ATP. Residues 799 to 822 (ETTSLPHEQPPAAKAKDAPQVPHQ) form a disordered region. The segment covering 808-820 (PPAAKAKDAPQVP) has biased composition (low complexity).

It belongs to the DNA mismatch repair MutS family.

In terms of biological role, this protein is involved in the repair of mismatches in DNA. It is possible that it carries out the mismatch recognition step. This protein has a weak ATPase activity. The chain is DNA mismatch repair protein MutS from Pseudomonas putida (strain GB-1).